The following is a 798-amino-acid chain: Peregrinol diphosphate synthase TPS1, chloroplastic (798 aa).

A chloroplast-targeting transit peptide spans 1–25 (MASLSTPNINNTTFVNSKTQLPAVK). Residue lysine 243 coordinates substrate. Mg(2+) is bound by residues aspartate 377 and aspartate 379. A DXDD motif motif is present at residues 377-380 (DLDD). Position 463 (lysine 463) interacts with substrate.

The protein belongs to the terpene synthase family. The cofactor is Mg(2+). As to expression, mostly expressed in trichomes of leaves and fruits.

It localises to the plastid. Its subcellular location is the chloroplast. It catalyses the reaction peregrinol diphosphate = (2E,6E,10E)-geranylgeranyl diphosphate + H2O. It functions in the pathway secondary metabolite biosynthesis; terpenoid biosynthesis. Functionally, involved in the biosynthesis of labdane-type diterpenoid including cleroda-dienols, and peregrinol lactones and furan derivatives, dopaminergic diterpenoids that can bind to dopamine receptors in the human pituitary gland, have probably ability to lower prolactin levels, and are used to treat menstrual cycle disorders (e.g. premenstrual syndrome and mastodynia). Terpene synthase that produces peregrinol diphosphate from geranylgeranyl diphosphate (GGPP). The polypeptide is Peregrinol diphosphate synthase TPS1, chloroplastic (Vitex agnus-castus (Chaste tree)).